The chain runs to 278 residues: Probable NADP-dependent mannitol dehydrogenase (278 aa).

NADP(+) contacts are provided by Ile45, Asn117, and Lys152. Active-site proton donor residues include Ser171 and Tyr186. 3 residues coordinate NADP(+): Tyr186, Lys190, and Thr220. Lys190 functions as the Lowers pKa of active site Tyr in the catalytic mechanism.

Belongs to the short-chain dehydrogenases/reductases (SDR) family. Homotetramer.

It catalyses the reaction D-mannitol + NADP(+) = D-fructose + NADPH + H(+). In terms of biological role, versatile oxidoreductase that catalyzes the oxidation and reduction of polar as well as non-polar substrates at a very broad pH range. Preferentially oxidizes secondary alcohols. Has highest activity for racemic 2-heptanol and racemic octanol. Is also an efficient reductase for selected substrates. Substrate selectivity was found for medium chain length ketones with the carbonyl function at position C-2. Has highest activities for ribulose and fructose. The enzyme is (R)-selective in the reduction direction and produces exclusively the (R)-enantiomer. This Yarrowia lipolytica (strain CLIB 122 / E 150) (Yeast) protein is Probable NADP-dependent mannitol dehydrogenase.